Consider the following 424-residue polypeptide: Putative glutamate--cysteine ligase 2-3 (424 aa).

Disordered regions lie at residues 1–20 (MQMAGRGANRRGQHRSPVLV) and 405–424 (GAAADAHKDPAPMLTRVRRP).

This sequence belongs to the glutamate--cysteine ligase type 2 family. YbdK subfamily.

The catalysed reaction is L-cysteine + L-glutamate + ATP = gamma-L-glutamyl-L-cysteine + ADP + phosphate + H(+). Functionally, ATP-dependent carboxylate-amine ligase which exhibits weak glutamate--cysteine ligase activity. The chain is Putative glutamate--cysteine ligase 2-3 from Paenarthrobacter aurescens (strain TC1).